The chain runs to 89 residues: Translation initiation factor IF-1, chloroplastic (89 aa).

In terms of domain architecture, S1-like spans 1 to 73 (MKEKEAKWVV…TKGRIIYRLP (73 aa)).

The protein belongs to the IF-1 family. In terms of assembly, component of the 30S ribosomal translation pre-initiation complex which assembles on the 30S ribosome in the order IF-2 and IF-3, IF-1 and N-formylmethionyl-tRNA(fMet); mRNA recruitment can occur at any time during PIC assembly.

It is found in the plastid. Its subcellular location is the chloroplast. In terms of biological role, one of the essential components for the initiation of protein synthesis. Stabilizes the binding of IF-2 and IF-3 on the 30S subunit to which N-formylmethionyl-tRNA(fMet) subsequently binds. Helps modulate mRNA selection, yielding the 30S pre-initiation complex (PIC). Upon addition of the 50S ribosomal subunit IF-1, IF-2 and IF-3 are released leaving the mature 70S translation initiation complex. In Jasminum nudiflorum (Winter jasmine), this protein is Translation initiation factor IF-1, chloroplastic.